A 540-amino-acid chain; its full sequence is 2-succinyl-5-enolpyruvyl-6-hydroxy-3-cyclohexene-1-carboxylate synthase (540 aa).

This sequence belongs to the TPP enzyme family. MenD subfamily. As to quaternary structure, homodimer. It depends on Mg(2+) as a cofactor. Mn(2+) is required as a cofactor. Thiamine diphosphate serves as cofactor.

The catalysed reaction is isochorismate + 2-oxoglutarate + H(+) = 5-enolpyruvoyl-6-hydroxy-2-succinyl-cyclohex-3-ene-1-carboxylate + CO2. The protein operates within quinol/quinone metabolism; 1,4-dihydroxy-2-naphthoate biosynthesis; 1,4-dihydroxy-2-naphthoate from chorismate: step 2/7. It participates in quinol/quinone metabolism; menaquinone biosynthesis. Its function is as follows. Catalyzes the thiamine diphosphate-dependent decarboxylation of 2-oxoglutarate and the subsequent addition of the resulting succinic semialdehyde-thiamine pyrophosphate anion to isochorismate to yield 2-succinyl-5-enolpyruvyl-6-hydroxy-3-cyclohexene-1-carboxylate (SEPHCHC). In Mycobacteroides abscessus (strain ATCC 19977 / DSM 44196 / CCUG 20993 / CIP 104536 / JCM 13569 / NCTC 13031 / TMC 1543 / L948) (Mycobacterium abscessus), this protein is 2-succinyl-5-enolpyruvyl-6-hydroxy-3-cyclohexene-1-carboxylate synthase.